The chain runs to 550 residues: O-phosphoserine--tRNA(Cys) ligase (550 aa).

The segment at 1 to 32 is disordered; the sequence is MRFNPQDWKEKSHTNFEGAWHDGPSVITPPGE. Residues 212–214, 257–259, 299–300, and asparagine 342 contribute to the substrate site; these read HMT, SAS, and YY.

It belongs to the class-II aminoacyl-tRNA synthetase family. O-phosphoseryl-tRNA(Cys) synthetase subfamily. In terms of assembly, homotetramer. Interacts with SepCysS.

It carries out the reaction tRNA(Cys) + O-phospho-L-serine + ATP = O-phospho-L-seryl-tRNA(Cys) + AMP + diphosphate. Its function is as follows. Catalyzes the attachment of O-phosphoserine (Sep) to tRNA(Cys). This chain is O-phosphoserine--tRNA(Cys) ligase, found in Methanoregula boonei (strain DSM 21154 / JCM 14090 / 6A8).